Consider the following 77-residue polypeptide: UPF0401 protein c3666 (77 aa).

Belongs to the UPF0401 family.

This Escherichia coli O6:H1 (strain CFT073 / ATCC 700928 / UPEC) protein is UPF0401 protein c3666.